A 3994-amino-acid chain; its full sequence is Hybrid PKS-NRPs synthetase opdA (3994 aa).

One can recognise a Ketosynthase family 3 (KS3) domain in the interval 6–442; that stretch reads PEPIAIVGSS…GTNSHVILES (437 aa). Residues cysteine 179, histidine 316, and histidine 362 each act as for beta-ketoacyl synthase activity in the active site. Residues 559–881 are malonyl-CoA:ACP transacylase (MAT) domain; the sequence is VFTGQGAQWP…LKRDSNDVEA (323 aa). Positions 951 to 1085 are N-terminal hotdog fold; the sequence is HELLGRRTHD…GRLIIHLGET (135 aa). Residues 951-1251 are dehydratase (DH) domain; it reads HELLGRRTHD…SVKPMAPPTA (301 aa). The PKS/mFAS DH domain occupies 951–1252; the sequence is HELLGRRTHD…VKPMAPPTAE (302 aa). Histidine 983 functions as the Proton acceptor; for dehydratase activity in the catalytic mechanism. A C-terminal hotdog fold region spans residues 1100–1252; sequence LLSVDTDEGY…VKPMAPPTAE (153 aa). Aspartate 1159 functions as the Proton donor; for dehydratase activity in the catalytic mechanism. Residues 1292–1593 form a methyltransferase (MT) domain region; sequence DRVVLYYVQR…VDLAFHDLPD (302 aa). A ketoreductase (KR) domain region spans residues 2123-2297; the sequence is TYLMVGMAGG…ASIIHIGFVT (175 aa). The Carrier 1 domain maps to 2406–2483; it reads EAVEITQKAF…QICTNAAKQL (78 aa). The residue at position 2443 (serine 2443) is an O-(pantetheine 4'-phosphoryl)serine. A disordered region spans residues 2486–2575; that stretch reads QKGGQEPSEQ…FDPDDRDYNP (90 aa). Composition is skewed to polar residues over residues 2505-2514 and 2522-2546; these read LHVSQGSLHT and TETS…SVTD. Over residues 2547–2556 the composition is skewed to basic and acidic residues; it reads TVEKRDKGDI. Acidic residues predominate over residues 2557 to 2570; it reads SVDEGPNEQFDPDD. Residues 2582-3007 are condensation (C) domain; the sequence is RLSSGQSRIY…SNTYMTVAKI (426 aa). The adenylation (A) (KR) domain stretch occupies residues 3043-3436; it reads HETNREDLAI…DGSLVFLGRL (394 aa). Residues 3553-3630 enclose the Carrier 2 domain; sequence PKLSLRQSEL…KMTMLVDLER (78 aa). The residue at position 3590 (serine 3590) is an O-(pantetheine 4'-phosphoryl)serine. The reductase (RED) domain stretch occupies residues 3679-3895; it reads TGATGFLGGS…FDFKKVEEVA (217 aa).

It in the C-terminal section; belongs to the NRP synthetase family. Requires pantetheine 4'-phosphate as cofactor.

The protein operates within secondary metabolite biosynthesis. Functionally, hybrid PKS-NRPS synthetase; part of the gene cluster that mediates the biosynthesis of oxopyrrolidines, polyketide-amino acid hybrid compounds with feature structures of tetramic acid. The polyketide chain is first assembled by the highly reducing PKS module of opdA using acetyl-CoA as the starter unit and five malonyl-CoA as the extender units. OpdC acts as trans-acting enoyl reductase and reduces the terminal alkenyl to alkane. The 17R in oxopyrrolidine A and 15R, 17S in oxopyrrolidine B are generated by non-stereospecific catalysis of the ketoreductase (KR) domain and enoyl reductases. Then the polyketides with specific configurations are transferred to the NRPS module of opdA and linked to L-tyrosine to form an amide bond. Finally, the oxopyrrolidines are offloaded through a Dieckmann cyclization catalyzed by the terminal D domain to give a tetramic acid moiety. This chain is Hybrid PKS-NRPs synthetase opdA, found in Penicillium oxalicum (strain 114-2 / CGMCC 5302) (Penicillium decumbens).